The chain runs to 284 residues: MDAIKKKMQAMKLEKDDAMDRADTLEQQNKEANIRAEKAEEEVHNLQKRMQQLENDLDQVQESLLKANTQLEEKDKALSNAEGEVAALNRRIQLLEEDLERSEERLNTATTKLAEASQAADESERMRKVLENRSLSDEERMDALENQLKEARFLAEEADRKYDEVARKLAMVEADLERAEERAETGESKIVELEEELRVVGNNLKSLEVSEEKANQREEAYKEQIKTLTNKLKAAEARAEFAERSVQKLQKEVDRLEDELVNEKEKYKSTTDELDQAFSELSGY.

Met-1 is subject to N-acetylmethionine. The interval 1–21 (MDAIKKKMQAMKLEKDDAMDR) is disordered. The stretch at 1-280 (MDAIKKKMQA…TDELDQAFSE (280 aa)) forms a coiled coil. Residues 12–21 (KLEKDDAMDR) are compositionally biased toward basic and acidic residues.

This sequence belongs to the tropomyosin family. As to quaternary structure, homodimer. As to expression, expressed in muscle (at protein level). Expressed in pincer muscles.

Functionally, tropomyosin, in association with the troponin complex, plays a central role in the calcium dependent regulation of muscle contraction. This is Tropomyosin Por p 1.0101 from Portunus pelagicus (Blue swimmer crab).